The sequence spans 635 residues: 1-deoxy-D-xylulose-5-phosphate synthase (635 aa).

Residues His78 and 119–121 (GHA) contribute to the thiamine diphosphate site. A Mg(2+)-binding site is contributed by Asp150. Thiamine diphosphate is bound by residues 151–152 (GS), Asn179, Phe291, and Glu376. Residue Asn179 participates in Mg(2+) binding.

The protein belongs to the transketolase family. DXPS subfamily. In terms of assembly, homodimer. The cofactor is Mg(2+). Requires thiamine diphosphate as cofactor.

The catalysed reaction is D-glyceraldehyde 3-phosphate + pyruvate + H(+) = 1-deoxy-D-xylulose 5-phosphate + CO2. It participates in metabolic intermediate biosynthesis; 1-deoxy-D-xylulose 5-phosphate biosynthesis; 1-deoxy-D-xylulose 5-phosphate from D-glyceraldehyde 3-phosphate and pyruvate: step 1/1. Functionally, catalyzes the acyloin condensation reaction between C atoms 2 and 3 of pyruvate and glyceraldehyde 3-phosphate to yield 1-deoxy-D-xylulose-5-phosphate (DXP). In Chlorobaculum tepidum (strain ATCC 49652 / DSM 12025 / NBRC 103806 / TLS) (Chlorobium tepidum), this protein is 1-deoxy-D-xylulose-5-phosphate synthase.